The following is an 89-amino-acid chain: Small ribosomal subunit protein uS15 (89 aa).

The protein belongs to the universal ribosomal protein uS15 family. Part of the 30S ribosomal subunit. Forms a bridge to the 50S subunit in the 70S ribosome, contacting the 23S rRNA.

One of the primary rRNA binding proteins, it binds directly to 16S rRNA where it helps nucleate assembly of the platform of the 30S subunit by binding and bridging several RNA helices of the 16S rRNA. In terms of biological role, forms an intersubunit bridge (bridge B4) with the 23S rRNA of the 50S subunit in the ribosome. The chain is Small ribosomal subunit protein uS15 from Azorhizobium caulinodans (strain ATCC 43989 / DSM 5975 / JCM 20966 / LMG 6465 / NBRC 14845 / NCIMB 13405 / ORS 571).